Reading from the N-terminus, the 490-residue chain is Argininosuccinate lyase (490 aa).

This sequence belongs to the lyase 1 family. Argininosuccinate lyase subfamily.

Its subcellular location is the cytoplasm. The enzyme catalyses 2-(N(omega)-L-arginino)succinate = fumarate + L-arginine. It participates in amino-acid biosynthesis; L-arginine biosynthesis; L-arginine from L-ornithine and carbamoyl phosphate: step 3/3. This Bifidobacterium longum subsp. infantis (strain ATCC 15697 / DSM 20088 / JCM 1222 / NCTC 11817 / S12) protein is Argininosuccinate lyase.